We begin with the raw amino-acid sequence, 122 residues long: Structural protein p14.5 (122 aa).

Disordered stretches follow at residues 1–27 (MADF…LEYD) and 85–122 (TSLV…HKSK). Ala2 carries the post-translational modification N-acetylalanine; by host. Positions 105–122 (KPKKKKHLFPKLSSHKSK) are enriched in basic residues.

It belongs to the asfivirus structural protein p14.5 family. As to quaternary structure, interacts with the major capsid protein. Interacts with host IRF3; this interaction interferes with the recruitment of IRF3 to TBK1. In terms of processing, acetylated.

It is found in the virion. Its function is as follows. Structural protein required for transport of intracellular particles from the assembly sites to the plasma membrane. Binds to both ssDNA and dsDNA. Suppressed the activation of the cGAS/STING pathway by interfering with the recruitment of IRF3 to TBK1, which in turn suppresses IRF3 phosphorylation, decreasing interferon production. This is Structural protein p14.5 from African swine fever virus (isolate Tick/Malawi/Lil 20-1/1983) (ASFV).